The following is a 261-amino-acid chain: HLA class II histocompatibility antigen, DM alpha chain (261 aa).

Residues 1–26 form the signal peptide; it reads MGHEQNQGAALLQMLPLLWLLPHSWA. The tract at residues 27–124 is alpha-1; the sequence is VPEAPTPMWP…KLDGKIPVSR (98 aa). Over 27 to 233 the chain is Lumenal; it reads VPEAPTPMWP…PSDLLENVLC (207 aa). Asparagine 41 carries N-linked (GlcNAc...) asparagine glycosylation. 2 disulfide bridges follow: cysteine 50-cysteine 105 and cysteine 147-cysteine 202. Residues 121–215 enclose the Ig-like C1-type domain; sequence PVSRGFPIAE…HEIDRYTAIA (95 aa). The interval 125–217 is alpha-2; that stretch reads GFPIAEVFTL…IDRYTAIAYW (93 aa). The interval 218-233 is connecting peptide; that stretch reads VPRNALPSDLLENVLC. A helical transmembrane segment spans residues 234-254; sequence GVAFGLGVLGIIVGIVLIIYF. Residues 255 to 261 lie on the Cytoplasmic side of the membrane; it reads RKPCSGD.

This sequence belongs to the MHC class II family. Heterodimer of an alpha chain (DMA) and a beta chain (DMB). Interacts with MHCII; this interaction mediates rapid selection of high-affinity peptides in a pH-dependent manner, with an optimum at pH 5.5.

Its subcellular location is the late endosome membrane. The protein resides in the lysosome membrane. Plays a critical role in catalyzing the release of class II-associated invariant chain peptide (CLIP) from newly synthesized MHC class II molecules and freeing the peptide binding site for acquisition of antigenic peptides. In B-cells, the interaction between HLA-DM and MHC class II molecules is regulated by HLA-DO. This chain is HLA class II histocompatibility antigen, DM alpha chain (HLA-DMA), found in Homo sapiens (Human).